A 201-amino-acid polypeptide reads, in one-letter code: Dephospho-CoA kinase (201 aa).

A DPCK domain is found at 6-201; sequence VMGLTGSIGM…RAIREKNPRG (196 aa). An ATP-binding site is contributed by 14–19; that stretch reads GMGKSA.

This sequence belongs to the CoaE family.

The protein localises to the cytoplasm. It carries out the reaction 3'-dephospho-CoA + ATP = ADP + CoA + H(+). It functions in the pathway cofactor biosynthesis; coenzyme A biosynthesis; CoA from (R)-pantothenate: step 5/5. Catalyzes the phosphorylation of the 3'-hydroxyl group of dephosphocoenzyme A to form coenzyme A. The polypeptide is Dephospho-CoA kinase (Novosphingobium aromaticivorans (strain ATCC 700278 / DSM 12444 / CCUG 56034 / CIP 105152 / NBRC 16084 / F199)).